The primary structure comprises 412 residues: Ribosomal RNA large subunit methyltransferase G (412 aa).

The interval Lys386–Arg412 is disordered. The segment covering Glu394–Leu406 has biased composition (polar residues).

It belongs to the methyltransferase superfamily. RlmG family.

The protein localises to the cytoplasm. The enzyme catalyses guanosine(1835) in 23S rRNA + S-adenosyl-L-methionine = N(2)-methylguanosine(1835) in 23S rRNA + S-adenosyl-L-homocysteine + H(+). In terms of biological role, specifically methylates the guanine in position 1835 (m2G1835) of 23S rRNA. The polypeptide is Ribosomal RNA large subunit methyltransferase G (Shewanella sediminis (strain HAW-EB3)).